Reading from the N-terminus, the 343-residue chain is Holliday junction branch migration complex subunit RuvB (343 aa).

Residues 1-23 (MSDDFEVVRPEEQAGDEKDRDLR) are disordered. Residues 1-183 (MSDDFEVVRP…FGIVQRFEFY (183 aa)) are large ATPase domain (RuvB-L). ATP-binding positions include Leu-22, Arg-23, Gly-64, Lys-67, Thr-68, Thr-69, 130-132 (EDY), Arg-173, Tyr-183, and Arg-220. A Mg(2+)-binding site is contributed by Thr-68. A small ATPAse domain (RuvB-S) region spans residues 184–254 (SHEELASIIS…TVAAGLKQLN (71 aa)). The head domain (RuvB-H) stretch occupies residues 257-343 (GLGLETYDRQ…LGDGQEGLFD (87 aa)). Positions 312 and 317 each coordinate DNA.

Belongs to the RuvB family. In terms of assembly, homohexamer. Forms an RuvA(8)-RuvB(12)-Holliday junction (HJ) complex. HJ DNA is sandwiched between 2 RuvA tetramers; dsDNA enters through RuvA and exits via RuvB. An RuvB hexamer assembles on each DNA strand where it exits the tetramer. Each RuvB hexamer is contacted by two RuvA subunits (via domain III) on 2 adjacent RuvB subunits; this complex drives branch migration. In the full resolvosome a probable DNA-RuvA(4)-RuvB(12)-RuvC(2) complex forms which resolves the HJ.

The protein resides in the cytoplasm. The enzyme catalyses ATP + H2O = ADP + phosphate + H(+). Functionally, the RuvA-RuvB-RuvC complex processes Holliday junction (HJ) DNA during genetic recombination and DNA repair, while the RuvA-RuvB complex plays an important role in the rescue of blocked DNA replication forks via replication fork reversal (RFR). RuvA specifically binds to HJ cruciform DNA, conferring on it an open structure. The RuvB hexamer acts as an ATP-dependent pump, pulling dsDNA into and through the RuvAB complex. RuvB forms 2 homohexamers on either side of HJ DNA bound by 1 or 2 RuvA tetramers; 4 subunits per hexamer contact DNA at a time. Coordinated motions by a converter formed by DNA-disengaged RuvB subunits stimulates ATP hydrolysis and nucleotide exchange. Immobilization of the converter enables RuvB to convert the ATP-contained energy into a lever motion, pulling 2 nucleotides of DNA out of the RuvA tetramer per ATP hydrolyzed, thus driving DNA branch migration. The RuvB motors rotate together with the DNA substrate, which together with the progressing nucleotide cycle form the mechanistic basis for DNA recombination by continuous HJ branch migration. Branch migration allows RuvC to scan DNA until it finds its consensus sequence, where it cleaves and resolves cruciform DNA. In Treponema denticola (strain ATCC 35405 / DSM 14222 / CIP 103919 / JCM 8153 / KCTC 15104), this protein is Holliday junction branch migration complex subunit RuvB.